The primary structure comprises 255 residues: Small ribosomal subunit protein eS1 (255 aa).

N-acetylalanine; partial is present on Ala-2.

This sequence belongs to the eukaryotic ribosomal protein eS1 family. In terms of assembly, component of the small ribosomal subunit. Mature ribosomes consist of a small (40S) and a large (60S) subunit. The 40S subunit contains about 33 different proteins and 1 molecule of RNA (18S). The 60S subunit contains about 49 different proteins and 3 molecules of RNA (25S, 5.8S and 5S).

The protein localises to the cytoplasm. This is Small ribosomal subunit protein eS1 from Vanderwaltozyma polyspora (strain ATCC 22028 / DSM 70294 / BCRC 21397 / CBS 2163 / NBRC 10782 / NRRL Y-8283 / UCD 57-17) (Kluyveromyces polysporus).